The following is a 291-amino-acid chain: Glycolipid transfer protein domain-containing protein 2 (291 aa).

The N-linked (GlcNAc...) asparagine glycan is linked to asparagine 276.

The protein belongs to the GLTP family.

This chain is Glycolipid transfer protein domain-containing protein 2 (GLTPD2), found in Homo sapiens (Human).